Consider the following 454-residue polypeptide: UDP-N-acetylmuramate--L-alanine ligase (454 aa).

Residue 113-119 (GSHGKTT) participates in ATP binding.

It belongs to the MurCDEF family.

It localises to the cytoplasm. The catalysed reaction is UDP-N-acetyl-alpha-D-muramate + L-alanine + ATP = UDP-N-acetyl-alpha-D-muramoyl-L-alanine + ADP + phosphate + H(+). The protein operates within cell wall biogenesis; peptidoglycan biosynthesis. In terms of biological role, cell wall formation. This chain is UDP-N-acetylmuramate--L-alanine ligase, found in Aquifex aeolicus (strain VF5).